Reading from the N-terminus, the 130-residue chain is Small ribosomal subunit protein uS8 (130 aa).

The residue at position 88 (lysine 88) is an N6-succinyllysine.

Belongs to the universal ribosomal protein uS8 family. As to quaternary structure, component of the 40S ribosomal subunit. Part of the small subunit (SSU) processome, composed of more than 70 proteins and the RNA chaperone small nucleolar RNA (snoRNA) U3.

It is found in the cytoplasm. The protein resides in the nucleus. It localises to the nucleolus. Its function is as follows. Component of the small ribosomal subunit. Part of the small subunit (SSU) processome, first precursor of the small eukaryotic ribosomal subunit. During the assembly of the SSU processome in the nucleolus, many ribosome biogenesis factors, an RNA chaperone and ribosomal proteins associate with the nascent pre-rRNA and work in concert to generate RNA folding, modifications, rearrangements and cleavage as well as targeted degradation of pre-ribosomal RNA by the RNA exosome. Required for proper erythropoiesis. The protein is Small ribosomal subunit protein uS8 (RPS15A) of Pongo abelii (Sumatran orangutan).